The sequence spans 36 residues: Photosystem II reaction center protein M (36 aa).

Met-1 carries the post-translational modification Blocked amino end (Met). Residues 1–11 are Lumenal-facing; the sequence is MEVNQLGFIAT. Residues 12–27 traverse the membrane as a helical segment; sequence ALFVLVPSVFLIILYV. At 28 to 36 the chain is on the cytoplasmic side; that stretch reads QTESQQKSS.

It belongs to the PsbM family. PSII is composed of 1 copy each of membrane proteins PsbA, PsbB, PsbC, PsbD, PsbE, PsbF, PsbH, PsbI, PsbJ, PsbK, PsbL, PsbM, PsbT, PsbX, PsbY, PsbZ, Psb30/Ycf12, peripheral proteins PsbO, CyanoQ (PsbQ), PsbU, PsbV, PsbU, PsbV and a large number of cofactors. It forms dimeric complexes. The cofactor is PSII binds multiple chlorophylls, carotenoids and specific lipids..

The protein resides in the cellular thylakoid membrane. In terms of biological role, one of the components of the core complex of photosystem II (PSII). PSII is a light-driven water:plastoquinone oxidoreductase that uses light energy to abstract electrons from H(2)O, generating O(2) and a proton gradient subsequently used for ATP formation. It consists of a core antenna complex that captures photons, and an electron transfer chain that converts photonic excitation into a charge separation. This subunit is found at the monomer-monomer interface. Probably involved in dimerization of PSII; at the monomer-monomer interface the only protein-protein contacts observed are between the 2 PsbM subunits. Lipids, chlorophylls and carotenoids contribute strongly to PSII dimerization. In Thermostichus vulcanus (Synechococcus vulcanus), this protein is Photosystem II reaction center protein M.